Consider the following 237-residue polypeptide: Uridylate kinase (237 aa).

11 to 14 contributes to the ATP binding site; the sequence is KLSG. Gly53 is a UMP binding site. Residues Gly54 and Arg58 each coordinate ATP. Residues Asp73 and 134–141 each bind UMP; that span reads TGNPFFTT. Thr161, Tyr167, and Asp170 together coordinate ATP.

The protein belongs to the UMP kinase family. As to quaternary structure, homohexamer.

It is found in the cytoplasm. It carries out the reaction UMP + ATP = UDP + ADP. Its pathway is pyrimidine metabolism; CTP biosynthesis via de novo pathway; UDP from UMP (UMPK route): step 1/1. Inhibited by UTP. Its function is as follows. Catalyzes the reversible phosphorylation of UMP to UDP. The chain is Uridylate kinase from Paraburkholderia xenovorans (strain LB400).